The primary structure comprises 519 residues: Cytochrome P450 52A13 (519 aa).

Cys466 provides a ligand contact to heme.

The protein belongs to the cytochrome P450 family. Requires heme as cofactor.

Its subcellular location is the membrane. Functionally, together with an NADPH cytochrome P450 the enzyme system catalyzes the terminal hydroxylation as the first step in the assimilation of alkanes and fatty acids. The protein is Cytochrome P450 52A13 (CYP52A13) of Debaryomyces hansenii (Yeast).